Consider the following 445-residue polypeptide: Probable glycine dehydrogenase (decarboxylating) subunit 1 (445 aa).

It belongs to the GcvP family. N-terminal subunit subfamily. The glycine cleavage system is composed of four proteins: P, T, L and H. In this organism, the P 'protein' is a heterodimer of two subunits.

The catalysed reaction is N(6)-[(R)-lipoyl]-L-lysyl-[glycine-cleavage complex H protein] + glycine + H(+) = N(6)-[(R)-S(8)-aminomethyldihydrolipoyl]-L-lysyl-[glycine-cleavage complex H protein] + CO2. Its function is as follows. The glycine cleavage system catalyzes the degradation of glycine. The P protein binds the alpha-amino group of glycine through its pyridoxal phosphate cofactor; CO(2) is released and the remaining methylamine moiety is then transferred to the lipoamide cofactor of the H protein. In Anaeromyxobacter sp. (strain Fw109-5), this protein is Probable glycine dehydrogenase (decarboxylating) subunit 1.